We begin with the raw amino-acid sequence, 486 residues long: Siroheme synthase (486 aa).

Residues 1–204 are precorrin-2 dehydrogenase /sirohydrochlorin ferrochelatase; sequence MNYLPIFVDL…HQIEQAEALV (204 aa). NAD(+) contacts are provided by residues 22-23 and 43-44; these read HV and EK. The residue at position 128 (Ser128) is a Phosphoserine. Residues 216-486 form a uroporphyrinogen-III C-methyltransferase region; the sequence is GEVSLVGAGP…NKETHWKQAA (271 aa). Position 225 (Pro225) interacts with S-adenosyl-L-methionine. Asp248 serves as the catalytic Proton acceptor. Residue Lys270 is the Proton donor of the active site. Residues 301–303, Val306, 331–332, Met383, and Gly412 each bind S-adenosyl-L-methionine; these read GGD and TA.

The protein in the N-terminal section; belongs to the precorrin-2 dehydrogenase / sirohydrochlorin ferrochelatase family. In the C-terminal section; belongs to the precorrin methyltransferase family.

It catalyses the reaction uroporphyrinogen III + 2 S-adenosyl-L-methionine = precorrin-2 + 2 S-adenosyl-L-homocysteine + H(+). The enzyme catalyses precorrin-2 + NAD(+) = sirohydrochlorin + NADH + 2 H(+). The catalysed reaction is siroheme + 2 H(+) = sirohydrochlorin + Fe(2+). Its pathway is cofactor biosynthesis; adenosylcobalamin biosynthesis; precorrin-2 from uroporphyrinogen III: step 1/1. It participates in cofactor biosynthesis; adenosylcobalamin biosynthesis; sirohydrochlorin from precorrin-2: step 1/1. The protein operates within porphyrin-containing compound metabolism; siroheme biosynthesis; precorrin-2 from uroporphyrinogen III: step 1/1. It functions in the pathway porphyrin-containing compound metabolism; siroheme biosynthesis; siroheme from sirohydrochlorin: step 1/1. Its pathway is porphyrin-containing compound metabolism; siroheme biosynthesis; sirohydrochlorin from precorrin-2: step 1/1. Functionally, multifunctional enzyme that catalyzes the SAM-dependent methylations of uroporphyrinogen III at position C-2 and C-7 to form precorrin-2 via precorrin-1. Then it catalyzes the NAD-dependent ring dehydrogenation of precorrin-2 to yield sirohydrochlorin. Finally, it catalyzes the ferrochelation of sirohydrochlorin to yield siroheme. This is Siroheme synthase from Actinobacillus pleuropneumoniae serotype 7 (strain AP76).